Reading from the N-terminus, the 143-residue chain is Transcriptional regulator MraZ (143 aa).

2 SpoVT-AbrB domains span residues 5-47 (EYEH…TLEE) and 76-119 (AIEV…DRET).

It belongs to the MraZ family. As to quaternary structure, forms oligomers.

It is found in the cytoplasm. It localises to the nucleoid. The chain is Transcriptional regulator MraZ from Staphylococcus haemolyticus (strain JCSC1435).